Here is a 149-residue protein sequence, read N- to C-terminus: Large ribosomal subunit protein uL15 (149 aa).

Residues 1–29 (MVSHLKKTRKLRGHVSHGHGRVGKHRKGG) are compositionally biased toward basic residues. Residues 1-38 (MVSHLKKTRKLRGHVSHGHGRVGKHRKGGCRGGRGKAG) are disordered.

It belongs to the universal ribosomal protein uL15 family.

The polypeptide is Large ribosomal subunit protein uL15 (RPL27A) (Tetrahymena thermophila).